Here is a 178-residue protein sequence, read N- to C-terminus: Gamma-crystallin S (178 aa).

Ser2 carries the post-translational modification N-acetylserine. The interval Ser2–Val5 is N-terminal arm. 2 Beta/gamma crystallin 'Greek key' domains span residues Ala6–Gly44 and Gly45–His87. The connecting peptide stretch occupies residues Leu88–Gln93. 2 consecutive Beta/gamma crystallin 'Greek key' domains span residues Tyr94 to Asp134 and Gly135 to Met177.

The protein belongs to the beta/gamma-crystallin family. Monomer.

Crystallins are the dominant structural components of the vertebrate eye lens. The polypeptide is Gamma-crystallin S (CRYGS) (Macropus fuliginosus (Western gray kangaroo)).